Here is a 753-residue protein sequence, read N- to C-terminus: Replication restart protein PriA (753 aa).

Residues 228–395 form the Helicase ATP-binding domain; that stretch reads SLVAEQFQTC…LSKKYTLSVL (168 aa). Residue 241 to 248 participates in ATP binding; the sequence is GVTGSGKT. The short motif at 337 to 340 is the DEAH box element; sequence DEEH. Residues cysteine 458, cysteine 461, cysteine 467, cysteine 470, cysteine 485, cysteine 488, cysteine 499, and cysteine 502 each coordinate Zn(2+). The 156-residue stretch at 491–646 folds into the Helicase C-terminal domain; the sequence is RLSKPITSCP…DFPAFYKEEI (156 aa).

It belongs to the helicase family. PriA subfamily. In terms of assembly, component of the replication restart primosome. It depends on Zn(2+) as a cofactor.

It carries out the reaction Couples ATP hydrolysis with the unwinding of duplex DNA by translocating in the 3'-5' direction.. The catalysed reaction is ATP + H2O = ADP + phosphate + H(+). Its function is as follows. Initiates the restart of stalled replication forks, which reloads the replicative helicase on sites other than the origin of replication. Recognizes and binds to abandoned replication forks and remodels them to uncover a helicase loading site. Promotes assembly of the primosome at these replication forks. This chain is Replication restart protein PriA, found in Chlamydia trachomatis serovar D (strain ATCC VR-885 / DSM 19411 / UW-3/Cx).